Here is a 110-residue protein sequence, read N- to C-terminus: Large ribosomal subunit protein uL22 (110 aa).

This sequence belongs to the universal ribosomal protein uL22 family. Part of the 50S ribosomal subunit.

This protein binds specifically to 23S rRNA; its binding is stimulated by other ribosomal proteins, e.g. L4, L17, and L20. It is important during the early stages of 50S assembly. It makes multiple contacts with different domains of the 23S rRNA in the assembled 50S subunit and ribosome. Functionally, the globular domain of the protein is located near the polypeptide exit tunnel on the outside of the subunit, while an extended beta-hairpin is found that lines the wall of the exit tunnel in the center of the 70S ribosome. The sequence is that of Large ribosomal subunit protein uL22 from Glaesserella parasuis serovar 5 (strain SH0165) (Haemophilus parasuis).